The chain runs to 562 residues: MSGTILENLSGRKLSILVSSLLLCQVACFLIGGLYAPVPAGHQIVMGIKCRDVAGRQNDTSFFLYSRGNGACDSVQDIDIEQDPLKMANQLVYVFQMPLPRDNRTLDYSRWQQNLIGVLQMDIAYDSSSELREPPKELQLTIDTRLAYRNKNDEDADWKPYAHSIEKRFLDCRAAHVGLQEILYTCDIIPLFELGALHHSFYLLNLRFPMDTPKRLNLQFGHMHDIILTAIHQNGGFTQVWLLLKSVLFPFIIGIMVWFWRRVHILQRSPALLEYMLLYLGGALSFLNLPLEYLTLSFEMPYMLLLSDVRQGIFYAMLLSFWLVFAGEHMLIQDSPNKSTIRSRYWKHLSAVVVGCISLFVFDICERGMQLRNPFYSIWTTPLGAKVAMSFIVLAGVSAGIYFLFLCYMVWKVFKDIGDKRTSLPSMSQARRLHYEGLIYRFKFLMLATLLCAGLTVAGFIMGQMAEGHWKWNEDIEIQLTSAFLTGVYGMWNIYIFALLILYAPSHKQWPTMRHSDETTQSNENIVASAASEEIEFSNLPSDSNPSEISSLTSFTRKVAFD.

Topologically, residues 1–13 (MSGTILENLSGRK) are cytoplasmic. Residues 14–34 (LSILVSSLLLCQVACFLIGGL) form a helical membrane-spanning segment. At 35 to 239 (YAPVPAGHQI…AIHQNGGFTQ (205 aa)) the chain is on the lumenal side. Residues Asn58 and Asn103 are each glycosylated (N-linked (GlcNAc...) asparagine). Residues 240–260 (VWLLLKSVLFPFIIGIMVWFW) traverse the membrane as a helical segment. The Cytoplasmic portion of the chain corresponds to 261–270 (RRVHILQRSP). The chain crosses the membrane as a helical span at residues 271 to 291 (ALLEYMLLYLGGALSFLNLPL). The Lumenal portion of the chain corresponds to 292–311 (EYLTLSFEMPYMLLLSDVRQ). The helical transmembrane segment at 312 to 332 (GIFYAMLLSFWLVFAGEHMLI) threads the bilayer. Residues 333-344 (QDSPNKSTIRSR) are Cytoplasmic-facing. A helical membrane pass occupies residues 345 to 365 (YWKHLSAVVVGCISLFVFDIC). The Lumenal portion of the chain corresponds to 366-390 (ERGMQLRNPFYSIWTTPLGAKVAMS). Residues 391-411 (FIVLAGVSAGIYFLFLCYMVW) traverse the membrane as a helical segment. Topologically, residues 412–441 (KVFKDIGDKRTSLPSMSQARRLHYEGLIYR) are cytoplasmic. A helical membrane pass occupies residues 442–462 (FKFLMLATLLCAGLTVAGFIM). Topologically, residues 463-482 (GQMAEGHWKWNEDIEIQLTS) are lumenal. Residues 483 to 503 (AFLTGVYGMWNIYIFALLILY) traverse the membrane as a helical segment. The Cytoplasmic segment spans residues 504–562 (APSHKQWPTMRHSDETTQSNENIVASAASEEIEFSNLPSDSNPSEISSLTSFTRKVAFD). Residues 538–562 (SNLPSDSNPSEISSLTSFTRKVAFD) are disordered. Residues 539-556 (NLPSDSNPSEISSLTSFT) show a composition bias toward polar residues.

This sequence belongs to the wntless family. Interacts with wg; in the Golgi. Interacts with Vps35, a component of the retromer complex; wls stability is regulated by Vps35.

Its subcellular location is the presynaptic cell membrane. It is found in the postsynaptic cell membrane. It localises to the cell membrane. The protein localises to the endoplasmic reticulum membrane. The protein resides in the endosome membrane. Its subcellular location is the golgi apparatus membrane. In terms of biological role, a segment polarity gene required for wingless (wg)-dependent patterning processes, acting in both wg-sending cells and wg-target cells. In non-neuronal cells wls directs wg secretion. The wls traffic loop encompasses the Golgi, the cell surface, an endocytic compartment and a retrograde route leading back to the Golgi, and involves clathrin-mediated endocytosis and the retromer complex (a conserved protein complex consisting of Vps35 and Vps26). In neuronal cells (the larval motorneuron NMJ), the wg signal moves across the synapse via the release of wls-containing exosome-like vesicles. Postsynaptic wls is required for the trafficking of fz2 through the fz2-interacting protein Grip. The sequence is that of Protein wntless from Drosophila mojavensis (Fruit fly).